The chain runs to 478 residues: Odorant receptor coreceptor (478 aa).

Residues 1 to 41 are Cytoplasmic-facing; it reads MQVQPTKYVGLVADLMPNIRLMQASGHFLFRYVTGPILIRK. The chain crosses the membrane as a helical span at residues 42 to 62; that stretch reads VYSWWTLAMVLIQFFAILGNL. The Extracellular portion of the chain corresponds to 63–73; that stretch reads ATNADDVNELT. Residues 74–94 form a helical membrane-spanning segment; the sequence is ANTITTLFFTHSVTKFIYFAV. Over 95 to 133 the chain is Cytoplasmic; it reads NSENFYRTLAIWNQTNTHPLFAESDARYHSIALAKMRKL. A helical transmembrane segment spans residues 134–154; the sequence is LVLVMATTVLSVVAWVTITFF. At 155–188 the chain is on the extracellular side; it reads GESVKTVLDKATNETYTVDIPRLPIKSWYPWNAM. N-linked (GlcNAc...) asparagine glycosylation is present at Asn-167. A helical transmembrane segment spans residues 189-209; it reads SGPAYIFSFIYQIYFLLFSMV. Over 210–338 the chain is Cytoplasmic; that stretch reads QSNLADVMFC…AIKYWVERHK (129 aa). A helical transmembrane segment spans residues 339 to 361; the sequence is HVVRLVSAIGDTYGPALLLHMLT. Residues 362–382 are Extracellular-facing; that stretch reads STIKLTLLAYQATKIDGVNVY. Residues 383-403 traverse the membrane as a helical segment; it reads GLTVIGYLCYALAQVFLFCIF. At 404 to 454 the chain is on the cytoplasmic side; that stretch reads GNRLIEESSSVMEAAYSCHWYDGSEEAKTFVQIVCQQCQKAMTISGAKFFT. The chain crosses the membrane as a helical span at residues 455–475; it reads VSLDLFASVLGAVVTYFMVLV. Residues 476 to 478 lie on the Extracellular side of the membrane; sequence QLK.

Belongs to the insect chemoreceptor superfamily. Heteromeric odorant receptor channel (TC 1.A.69) family. Orco subfamily. In terms of assembly, heterodimer with conventional odorant receptors (ORs). Complexes exist early in the endomembrane system in olfactory sensory neurons (OSNs), coupling these complexes to the conserved ciliary trafficking pathway. Expressed in olfactory and gustatory organs of both adult and immature stages. Highest expression is seen in adult antennae and the maxillary palps. Lower expression also seen in proboscis and legs. Within the antenna, expression originates in cell bodies and projects into the lumen of an individual sensillum, presumably along the dendritic extension of the neuron. Within the maxillary palps, expression is seen in a small number of cell bodies and in projections into the sensillar cone. Within the probiscus, expression is seen in a single type of sensillum on the outer surface of the labellar lobes.

The protein localises to the cell membrane. Its function is as follows. Odorant coreceptor which complexes with conventional odorant receptors (ORs) to form odorant-sensing units, providing sensitive and prolonged odorant signaling and calcium permeability. Orco is a universal and integral part of the functional odorant receptor, involved in the dendritic localization of other olfactory receptors. Can form functional ion channels in the absence of an odor-binding OR. Plays a key role in preferred attraction of females for humans over non-human hosts for blood feeding. Human attraction plays a crucial role in the transmission of Plasmodium protozoans by the mosquito leading to infection diseases like malaria. Also required for the response to N,N-Diethyl-meta-toluamide (DEET), the most widely used insect repellent worldwide. In Anopheles gambiae (African malaria mosquito), this protein is Odorant receptor coreceptor (Orco).